The primary structure comprises 427 residues: MRKPLIICDFDGTITTNDNIISIMKQFAPEEWTALKDGVLSKDISIRDGVGRMFNLLPASLKEDITAYVLKQAETRPGFKEFVSFLDEKGLPFYVVSGGMDFFVYPLLEGIVGKDRIYCNEAAFTSRNIEIRWPYPCDGGCGNDCGCCKPSIIRRLKGRDDFVVMIGDSVTDVEAAKCSDLCIARDYLLRECEELGLKHAAFGDFRDVRRILEETAEVKEWMSEQKRQELAEVKKELAERDWFPATSGNLSIKVSEDPLRFLITASGKDKRKETEEDFLLADEEGRPAETGHALKPSAETLLHTYVYQHTNAGCCLHVHTVDNNVISELYAKEKQVTFRGQEIIKALGLWEEHAEVTVPIIENSAHIPDLAADFAGHLSGDSGAVLIRSHGITVWGKTAFEAKRMLEAYEFLFSWHLKLKALQAYHV.

The HK-MTPenyl-1-P phosphatase stretch occupies residues methionine 1–tryptophan 221. The MTRu-1-P dehydratase stretch occupies residues methionine 222–valine 427. Zn(2+) is bound by residues histidine 317 and histidine 319.

In the N-terminal section; belongs to the HAD-like hydrolase superfamily. MtnX family. It in the C-terminal section; belongs to the aldolase class II family. MtnB subfamily. In terms of assembly, homotetramer. Requires Zn(2+) as cofactor.

The catalysed reaction is 5-(methylsulfanyl)-D-ribulose 1-phosphate = 5-methylsulfanyl-2,3-dioxopentyl phosphate + H2O. It carries out the reaction 2-hydroxy-5-methylsulfanyl-3-oxopent-1-enyl phosphate + H2O = 1,2-dihydroxy-5-(methylsulfanyl)pent-1-en-3-one + phosphate. Its pathway is amino-acid biosynthesis; L-methionine biosynthesis via salvage pathway; L-methionine from S-methyl-5-thio-alpha-D-ribose 1-phosphate: step 2/6. It functions in the pathway amino-acid biosynthesis; L-methionine biosynthesis via salvage pathway; L-methionine from S-methyl-5-thio-alpha-D-ribose 1-phosphate: step 4/6. Catalyzes the dehydration of methylthioribulose-1-phosphate (MTRu-1-P) into 2,3-diketo-5-methylthiopentyl-1-phosphate (DK-MTP-1-P). Functionally, dephosphorylates 2-hydroxy-3-keto-5-methylthiopentenyl-1-phosphate (HK-MTPenyl-1-P) yielding 1,2-dihydroxy-3-keto-5-methylthiopentene (DHK-MTPene). The protein is Bifunctional enzyme MtnB/MtnX (mtnB/mtnX) of Bacillus licheniformis (strain ATCC 14580 / DSM 13 / JCM 2505 / CCUG 7422 / NBRC 12200 / NCIMB 9375 / NCTC 10341 / NRRL NRS-1264 / Gibson 46).